The chain runs to 289 residues: Shikimate dehydrogenase (NADP(+)) (289 aa).

Shikimate contacts are provided by residues 19 to 21 (SMS) and Thr-66. Lys-70 (proton acceptor) is an active-site residue. Shikimate is bound by residues Asn-91 and Asp-106. NADP(+) contacts are provided by residues 131–135 (GAGGA), 155–160 (NRTLKK), and Leu-229. Residue Tyr-231 coordinates shikimate. Gly-252 is an NADP(+) binding site.

The protein belongs to the shikimate dehydrogenase family. Homodimer.

The catalysed reaction is shikimate + NADP(+) = 3-dehydroshikimate + NADPH + H(+). It participates in metabolic intermediate biosynthesis; chorismate biosynthesis; chorismate from D-erythrose 4-phosphate and phosphoenolpyruvate: step 4/7. In terms of biological role, involved in the biosynthesis of the chorismate, which leads to the biosynthesis of aromatic amino acids. Catalyzes the reversible NADPH linked reduction of 3-dehydroshikimate (DHSA) to yield shikimate (SA). In Halothermothrix orenii (strain H 168 / OCM 544 / DSM 9562), this protein is Shikimate dehydrogenase (NADP(+)).